A 288-amino-acid chain; its full sequence is Fatty acid-binding protein TM_1468 (288 aa).

The DegV domain occupies 3 to 283 (VKILVDSTAD…PGTVGFGIEV (281 aa)). Hexadecanoate is bound by residues Thr63 and Ser96.

As to quaternary structure, monomer.

Its function is as follows. Binds long-chain fatty acids, such as palmitate, and may play a role in lipid transport or fatty acid metabolism. The polypeptide is Fatty acid-binding protein TM_1468 (Thermotoga maritima (strain ATCC 43589 / DSM 3109 / JCM 10099 / NBRC 100826 / MSB8)).